The sequence spans 271 residues: Mannosyl-3-phosphoglycerate phosphatase (271 aa).

The Nucleophile role is filled by D13. Positions 13, 15, and 214 each coordinate Mg(2+).

It belongs to the HAD-like hydrolase superfamily. MPGP family. The cofactor is Mg(2+).

Its subcellular location is the cytoplasm. It catalyses the reaction 2-O-(alpha-D-mannosyl)-3-phosphoglycerate + H2O = (2R)-2-O-(alpha-D-mannosyl)-glycerate + phosphate. The chain is Mannosyl-3-phosphoglycerate phosphatase (yedP) from Shigella dysenteriae serotype 1 (strain Sd197).